We begin with the raw amino-acid sequence, 112 residues long: Protein lin-52 homolog (112 aa).

The protein belongs to the lin-52 family. In terms of assembly, component of the DREAM complex.

The chain is Protein lin-52 homolog (lin52) from Tetraodon nigroviridis (Spotted green pufferfish).